Here is a 562-residue protein sequence, read N- to C-terminus: Arginine--tRNA ligase 2 (562 aa).

Positions 122–132 (PNIAKPFSMGH) match the 'HIGH' region motif.

Belongs to the class-I aminoacyl-tRNA synthetase family. As to quaternary structure, monomer.

It localises to the cytoplasm. The catalysed reaction is tRNA(Arg) + L-arginine + ATP = L-arginyl-tRNA(Arg) + AMP + diphosphate. This is Arginine--tRNA ligase 2 (argS2) from Bacillus anthracis.